Reading from the N-terminus, the 51-residue chain is Ribosome biogenesis protein Nop10 (51 aa).

The protein belongs to the NOP10 family.

In terms of biological role, involved in ribosome biogenesis; more specifically in 18S rRNA pseudouridylation and in cleavage of pre-rRNA. This chain is Ribosome biogenesis protein Nop10, found in Methanosarcina barkeri (strain Fusaro / DSM 804).